A 608-amino-acid polypeptide reads, in one-letter code: MSKVIGIDLGTTNSAVAVMEGGESVIVPNSEGNRTTPSIVAFTKDGERLVGETAKRQAITNPDRTITSIKREMGTEYKVNIDGKDYTPEEISAMILQKLKADTESYLGEEVTEAVITVPAYFTDSQRQATKNAGKIAGLNVKRIINEPTAAALAYGIDKETDQHKVMVYDLGGGTFDVSILEVGDGVFEVLATRGNNRLGGDDFDEKLLNYLADEFMKQNGVDLRKDPTSKQRLKDAAENAKKELSTRVSTNVNLPFISAVNGTPVHLNMDITRSKFDELTSDLVEESLKPVRQALEDAGLSHNDIEKVLLVGGSTRIPAVQEAVKKLIGKNPQKDINPDECVAIGAALQGGVLTGEVKDLLLLDVTPLSLGIETLGGVCTKLIERNTTIPTKKSQVFTTAADGQTSVEIKVLQGEREMAADNTLLGQFNLTEIPAAPRGVPQIEVTFDIDANGIVNVSAKDLGSGKQQAMTITSSTKMSDDEIKRKVDEASKYAEEDKNKKETIETKNSAESVIYQVEKTIKDLGDKVSETEKSDINSKIEALKSILDSGDNKDIKAKTDELTQEMYKLSSKLYENNAQQPGASQEAKKDDDVVDADYEVVDDDENK.

Thr175 bears the Phosphothreonine; by autocatalysis mark.

This sequence belongs to the heat shock protein 70 family.

In terms of biological role, acts as a chaperone. In Finegoldia magna (strain ATCC 29328 / DSM 20472 / WAL 2508) (Peptostreptococcus magnus), this protein is Chaperone protein DnaK.